A 389-amino-acid chain; its full sequence is MALQPSPLRVAMVAGEPSGDLLAASLLDGLTSRLPAGTQYYGIGGPRMIATGFDAHFPMEKLSVRGYVEALKHIPGILGIRNELKRQLLAEPPSVFVGVDAPDFNFGLEHPLREAGIPTVHFVCPSIWAWRGGRIKKIAKAVDHMLCVFPFETALLEKAGVAASYVGHPLADEIPLVPDTLGARRALGLAQDGPIIAVLPGSRRSEIDLIGPTFFAAMEMMQHQEPNLRFVMPAATPALREMLRPLVDSHPGLALTITDGQAQLAMTAADAILVKSGTVTLEAALLKKPMVISYKVPWLTGQIMRRQGYLPYVGLPNILAGRFVVPEILQHFATPQALAEATLKQLRDETNRRTLTEIFTEMHHVLKQNTAQRAAEVVASVIEKRKGRP.

Belongs to the LpxB family.

It carries out the reaction a lipid X + a UDP-2-N,3-O-bis[(3R)-3-hydroxyacyl]-alpha-D-glucosamine = a lipid A disaccharide + UDP + H(+). Its pathway is bacterial outer membrane biogenesis; LPS lipid A biosynthesis. Functionally, condensation of UDP-2,3-diacylglucosamine and 2,3-diacylglucosamine-1-phosphate to form lipid A disaccharide, a precursor of lipid A, a phosphorylated glycolipid that anchors the lipopolysaccharide to the outer membrane of the cell. The sequence is that of Lipid-A-disaccharide synthase from Paraburkholderia phytofirmans (strain DSM 17436 / LMG 22146 / PsJN) (Burkholderia phytofirmans).